We begin with the raw amino-acid sequence, 637 residues long: MGKTIRLTTAQALIQFLNRQYIHVDGKEEPFVEGIFTIFGHGNVLGIGQALEQDAGHLKVYQGKNEQGMAHAAMAYSKQMLRRKIYAVSTSVGPGAANLTAAAGTALANHIPVLLLPADTFATRQPDPVLQQVEQEYSAAVTTNDALKPVSRYWDRITRPEQLMSSLIRAFEVMTDPAKAGPATICISQDVEGEAFDFDESFFEKRVHYIDRMQPSERELKGAAERIKQSSRPVILVGGGAKYSGAREELIALSETYGIPLVETQAGKSTVEADFANNLGGMGITGTLAANKAARQADLIIGVGTRYTDFATSSKTAFDFDKAKFLNINVSRMQAYKLDAFQVVADAKVTLGRLHGLLDGYKSAFGTAIKDWKDEWQAERDRLGKVTFTRDAFEPEIKNHFSQDVLNEYADALGTELPQTTALLTINDTIPEDSVVISSAGSLPGDLQRLWHSNVPNTYHLEYGYSCMGYEVSGTLGLKLAHPDKEVYSLVGDGSFLMLHSELITALQYNKKINVLLFDNSGFGCINNLQMDHGSGSYFCEFRTEDNQILNVDYAKVAEGYGAKTYRANTVEELKAALEDAKTQDVSTLIEMKVLPKTMTDGYDSWWHVGVAEVSEQKSVQRAYEAKETKLKSAKQY.

Residue E66 participates in thiamine diphosphate binding. A thiamine pyrophosphate binding region spans residues 442–522 (SLPGDLQRLW…INVLLFDNSG (81 aa)). Residues D493 and N520 each coordinate Mg(2+).

It belongs to the TPP enzyme family. Mg(2+) serves as cofactor. Requires thiamine diphosphate as cofactor.

The catalysed reaction is 3D-3,5/4-trihydroxycyclohexane-1,2-dione + H2O = 5-deoxy-D-glucuronate + H(+). It participates in polyol metabolism; myo-inositol degradation into acetyl-CoA; acetyl-CoA from myo-inositol: step 3/7. Its function is as follows. Involved in the cleavage of the C1-C2 bond of 3D-(3,5/4)-trihydroxycyclohexane-1,2-dione (THcHDO) to yield 5-deoxy-glucuronate (5DG). The polypeptide is 3D-(3,5/4)-trihydroxycyclohexane-1,2-dione hydrolase (Bacillus velezensis (strain DSM 23117 / BGSC 10A6 / LMG 26770 / FZB42) (Bacillus amyloliquefaciens subsp. plantarum)).